A 563-amino-acid polypeptide reads, in one-letter code: MGTDTAQATARPVRTQQPGRLIVDWLTTTDHKKIGHLYLITSFAFFLIGGVMALVMRAELARPGMQIVDNNQFNQLFTLHGTIMLLLFATPTFAGFANEIMPLQIGSPDVAFPRLNMLSYWLFLFGGLIVLGSLAVPSGPAAFGWFAYAPLNSLERSPGIGADMWIMGLALAGFGTILGSVNFLTTIIGMRAPGMTMFRMPIFTWNTLFTSILVLMAFPVLAAALLVLEADRRFGSQVFDAANGGALLWQHLFWFFGHPEVYIIALPFFGIITEIIPVFSRKPIFGYLTLIGATAAITGLSVVVWAHHMFATGAVLLPFFSFMSFLIAVPTGVKFFNWTGTMLKGSLSFETPMLWATGFLVSFLFGGLTGVILASPPLDFHVTDSYFVVAHFHYVVFGTVVFATFGGFYFWWPKFTGKMLDERLGKIHFWTLFVGFHTTFLVQHWLGAEGMPRRYADYLAADGFTALNTLSTIGAFLLGMSTLPFLYNVWKTARYGRKVEVDDPWGFGRSLEWTTSCPPPRHNFVTLPRVRSESPAFDLHHPAHAGEAPQPEPKHEQADREPS.

The next 7 helical transmembrane spans lie at Ile-34 to Leu-54, Leu-76 to Phe-96, Met-117 to Pro-137, Met-164 to Leu-184, Leu-208 to Leu-228, Leu-252 to Ile-272, and Ile-284 to Val-304. Fe(II)-heme a is bound at residue His-80. Cu cation is bound by residues His-258 and Tyr-262. The segment at residues His-258–Tyr-262 is a cross-link (1'-histidyl-3'-tyrosine (His-Tyr)). His-307 and His-308 together coordinate Cu cation. Helical transmembrane passes span Met-309–Val-329 and Met-353–Leu-373. A heme a3-binding site is contributed by His-391. 3 helical membrane passes run Phe-392–Trp-412, Ile-427–Gly-447, and Leu-470–Trp-490. His-393 serves as a coordination point for Fe(II)-heme a. Positions Ala-536–Ser-563 are disordered. The segment covering Glu-552–Ser-563 has biased composition (basic and acidic residues).

The protein belongs to the heme-copper respiratory oxidase family. Associates with subunits II, III and IV to form cytochrome c oxidase. Cu(2+) is required as a cofactor. Heme serves as cofactor.

It is found in the cell membrane. It catalyses the reaction 4 Fe(II)-[cytochrome c] + O2 + 8 H(+)(in) = 4 Fe(III)-[cytochrome c] + 2 H2O + 4 H(+)(out). It functions in the pathway energy metabolism; oxidative phosphorylation. In terms of biological role, cytochrome c oxidase is the component of the respiratory chain that catalyzes the reduction of oxygen to water. Subunits 1-3 form the functional core of the enzyme complex. CO I is the catalytic subunit of the enzyme. Electrons originating in cytochrome c are transferred via the copper A center of subunit 2 and heme A of subunit 1 to the bimetallic center formed by heme A3 and copper B. This is Putative cytochrome c oxidase subunit 1-beta (ctaD2) from Streptomyces avermitilis (strain ATCC 31267 / DSM 46492 / JCM 5070 / NBRC 14893 / NCIMB 12804 / NRRL 8165 / MA-4680).